We begin with the raw amino-acid sequence, 252 residues long: Anamorsin homolog (252 aa).

The interval 1 to 153 is N-terminal SAM-like domain; sequence MINFSNTLII…AENPDFNKSD (153 aa). The tract at residues 153–166 is linker; the sequence is DDDNNLVSSDEEIY. Cys-169, Cys-180, Cys-183, and Cys-185 together coordinate [2Fe-2S] cluster. The tract at residues 169–185 is fe-S binding site A; sequence CEDKKKVVNRVCDNCTC. 4 residues coordinate [4Fe-4S] cluster: Cys-215, Cys-218, Cys-226, and Cys-229. Short sequence motifs (cx2C motif) lie at residues 215–218 and 226–229; these read CGNC and CGSC. A fe-S binding site B region spans residues 215 to 229; the sequence is CGNCYLGDAFRCGSC.

It belongs to the anamorsin family. As to quaternary structure, monomer. [2Fe-2S] cluster serves as cofactor. [4Fe-4S] cluster is required as a cofactor.

Its subcellular location is the cytoplasm. It localises to the mitochondrion intermembrane space. In terms of biological role, component of the cytosolic iron-sulfur (Fe-S) protein assembly (CIA) machinery. Required for the maturation of extramitochondrial Fe-S proteins. Part of an electron transfer chain functioning in an early step of cytosolic Fe-S biogenesis, facilitating the de novo assembly of a [4Fe-4S] cluster on the cytosolic Fe-S scaffold complex. Electrons are transferred from NADPH via a FAD- and FMN-containing diflavin oxidoreductase. Together with the diflavin oxidoreductase, also required for the assembly of the diferric tyrosyl radical cofactor of ribonucleotide reductase (RNR), probably by providing electrons for reduction during radical cofactor maturation in the catalytic small subunit. The sequence is that of Anamorsin homolog (DRE2) from Plasmodium berghei (strain Anka).